A 308-amino-acid polypeptide reads, in one-letter code: Glutaminase (308 aa).

Substrate contacts are provided by Ser66, Asn117, Glu161, Asn168, Tyr192, Tyr244, and Val262.

The protein belongs to the glutaminase family. Homotetramer.

The enzyme catalyses L-glutamine + H2O = L-glutamate + NH4(+). The chain is Glutaminase from Salmonella heidelberg (strain SL476).